A 412-amino-acid chain; its full sequence is Putative competence-damage inducible protein (412 aa).

It belongs to the CinA family.

The protein is Putative competence-damage inducible protein of Bacillus cytotoxicus (strain DSM 22905 / CIP 110041 / 391-98 / NVH 391-98).